The primary structure comprises 349 residues: 6-phosphogluconolactonase (349 aa).

Residues 125–151 (LQSPVSEAAHTGKGPHERQEKPHTHYA) are disordered. Residues 138-147 (GPHERQEKPH) are compositionally biased toward basic and acidic residues.

The protein belongs to the cycloisomerase 2 family.

It carries out the reaction 6-phospho-D-glucono-1,5-lactone + H2O = 6-phospho-D-gluconate + H(+). The protein operates within carbohydrate degradation; pentose phosphate pathway; D-ribulose 5-phosphate from D-glucose 6-phosphate (oxidative stage): step 2/3. Its function is as follows. Catalyzes the hydrolysis of 6-phosphogluconolactone to 6-phosphogluconate. This Bacillus subtilis (strain 168) protein is 6-phosphogluconolactonase (pgl).